The following is a 398-amino-acid chain: Tyrosine--tRNA ligase (398 aa).

A 'HIGH' region motif is present at residues 42–51 (PTAPDLHLGH). The short motif at 226–230 (KMSKS) is the 'KMSKS' region element. K229 provides a ligand contact to ATP. The 57-residue stretch at 341–397 (AFLEAAGLVKSRGEAKRLIKEGALSVDGVRCDDANSPLASGEYVIKLGKKRFLRLTV) folds into the S4 RNA-binding domain.

Belongs to the class-I aminoacyl-tRNA synthetase family. TyrS type 2 subfamily. Homodimer.

Its subcellular location is the cytoplasm. It catalyses the reaction tRNA(Tyr) + L-tyrosine + ATP = L-tyrosyl-tRNA(Tyr) + AMP + diphosphate + H(+). Functionally, catalyzes the attachment of tyrosine to tRNA(Tyr) in a two-step reaction: tyrosine is first activated by ATP to form Tyr-AMP and then transferred to the acceptor end of tRNA(Tyr). In Nitratidesulfovibrio vulgaris (strain ATCC 29579 / DSM 644 / CCUG 34227 / NCIMB 8303 / VKM B-1760 / Hildenborough) (Desulfovibrio vulgaris), this protein is Tyrosine--tRNA ligase.